Here is a 238-residue protein sequence, read N- to C-terminus: MSKGEELFTGVVPILVELDGDVNGHKFSVSGEGEGDATYGKLTLKFICTTGKLPVPWPTLVTTFSYGVQCFSRYPDHMKQHDFFKSAMPEGYVQERTIFFKDDGNYKTRAEVKFEGDTLVNRIELKGIDFKEDGNILGHKLEYNYNSHNVYIMADKQKNGIKVNFKIRHNIEDGSVQLADHYQQNTPIGDGPVLLPDNHYLSTQSALSKDPNEKRDHMVLLEFVTAAGITHGMDELYK.

The segment at residues 65–67 is a cross-link (5-imidazolinone (Ser-Gly)); that stretch reads SYG. Tyr-66 carries the post-translational modification (Z)-2,3-didehydrotyrosine.

The protein belongs to the GFP family. Monomer. In terms of processing, contains a chromophore consisting of modified amino acid residues. The chromophore is formed by autocatalytic backbone condensation between Ser-65 and Gly-67, and oxidation of Tyr-66 to didehydrotyrosine. Maturation of the chromophore requires nothing other than molecular oxygen. In terms of tissue distribution, photocytes.

Energy-transfer acceptor. Its role is to transduce the blue chemiluminescence of the protein aequorin into green fluorescent light by energy transfer. Fluoresces in vivo upon receiving energy from the Ca(2+)-activated photoprotein aequorin. The polypeptide is Green fluorescent protein (GFP) (Aequorea victoria (Water jellyfish)).